A 142-amino-acid polypeptide reads, in one-letter code: Galactose-6-phosphate isomerase subunit LacA (142 aa).

This sequence belongs to the LacAB/RpiB family. As to quaternary structure, heteromultimeric protein consisting of LacA and LacB.

It carries out the reaction aldehydo-D-galactose 6-phosphate = keto-D-tagatose 6-phosphate. It participates in carbohydrate metabolism; D-galactose 6-phosphate degradation; D-tagatose 6-phosphate from D-galactose 6-phosphate: step 1/1. In Staphylococcus epidermidis (strain ATCC 35984 / DSM 28319 / BCRC 17069 / CCUG 31568 / BM 3577 / RP62A), this protein is Galactose-6-phosphate isomerase subunit LacA.